The primary structure comprises 1097 residues: DNA-directed RNA polymerase subunit beta (1097 aa).

The disordered stretch occupies residues 1072–1097 (QDVNPRRSTPSRPTYESLGVADYDED).

The protein belongs to the RNA polymerase beta chain family. In cyanobacteria the RNAP catalytic core is composed of 2 alpha, 1 beta, 1 beta', 1 gamma and 1 omega subunit. When a sigma factor is associated with the core the holoenzyme is formed, which can initiate transcription.

It catalyses the reaction RNA(n) + a ribonucleoside 5'-triphosphate = RNA(n+1) + diphosphate. DNA-dependent RNA polymerase catalyzes the transcription of DNA into RNA using the four ribonucleoside triphosphates as substrates. The sequence is that of DNA-directed RNA polymerase subunit beta from Parasynechococcus marenigrum (strain WH8102).